A 610-amino-acid chain; its full sequence is Phragmoplastin DRP1A (610 aa).

The residue at position 1 (Met1) is an N-acetylmethionine. One can recognise a Dynamin-type G domain in the interval 31-300 (WDSLPAIAVV…LERVIKSRIP (270 aa)). Residues 41–48 (GGQSSGKS) are G1 motif. 44-49 (SSGKSS) serves as a coordination point for GTP. The G2 motif stretch occupies residues 67–69 (VTR). The interval 142–145 (DLPG) is G3 motif. Residues 211–214 (TKID) are G4 motif. GTP contacts are provided by residues 212 to 217 (KIDLMD) and 242 to 245 (NRSQ). Positions 241–244 (VNRS) are G5 motif. In terms of domain architecture, GED spans 518–610 (LRRIGSNVLS…SEIDAVAWSK (93 aa)).

This sequence belongs to the TRAFAC class dynamin-like GTPase superfamily. Dynamin/Fzo/YdjA family. As to quaternary structure, forms homodimer and may homooligomerize and heterooligomerize to form the phragmoplastin complex. Interacts with AGD3/VAN3. May interact with CALS1. Binds to AHK2. Binds to SH3P2. Forms a complex made of SH3P2 and DRP1A and triggers its accumulation at the cell plate. Interacts with DRP2B at the plasma membrane and in forming clathrin-coated vesicles (CCV). Binds to PHIP1. In terms of tissue distribution, ubiquitous. Expressed in leaves (at protein level).

The protein resides in the cytoplasm. It is found in the cytoskeleton. It localises to the phragmoplast. Its subcellular location is the cell cortex. The protein localises to the cytoplasmic vesicle. The protein resides in the clathrin-coated vesicle. It is found in the cell membrane. It carries out the reaction GTP + H2O = GDP + phosphate + H(+). Microtubule-associated force-producing protein that is targeted to at the leading edges of the forming cell plate during cytokinesis. Also plays a major role in plasma membrane maintenance and cell wall integrity with implications in vesicular trafficking, polar cell expansion, vascular formation, and other aspects of plant growth and development, including stigmatic papillae expansion. Collaboratively with DRP2B, participates in clathrin-coated vesicle formation during endocytosis. Necessary for BOR1 polar localization in low-boron (B) conditions as well as for BOR1 endocytosis and subsequent degradation under high-concentration of boron. Has a GTPase activity. Required for the sterols-dependent dynamic high lipid order observed at the cell plate of dividing cells. Together with SH3P2, converts the fused vesicles to tubular structures at the cell plate and phragmoplasts during cytokinesis. With DRP2B and PIP5K3, required for the precise coordination of polar ARAC3/ROP6 and ARAC4/ROP2 placement and subsequent root hair positioning during planar polarity formation in root hair-forming cells, probably by mediating the correct basal-to-planar polarity switching of D6PK into the polar, lipid-enriched domain. Involved in endocytosis required for cellulose deposition during cell wall formation and elongation. Interacts with plasma membrane-mimetic liposomes and induces their clustering. The protein is Phragmoplastin DRP1A of Arabidopsis thaliana (Mouse-ear cress).